Here is a 344-residue protein sequence, read N- to C-terminus: Unsaturated rhamnogalacturonyl hydrolase YesR (344 aa).

Substrate-binding positions include 30–31, N74, and 118–128; these read DW and QHTVNAAEYVF. The active-site Proton donor is the D135. Substrate-binding positions include 198–202 and 308–309; these read RANGW and NA.

Belongs to the glycosyl hydrolase 105 family. In terms of assembly, monomer.

It is found in the cytoplasm. The catalysed reaction is 2-O-(4-deoxy-beta-L-threo-hex-4-enopyranuronosyl)-alpha-L-rhamnose + H2O = 5-dehydro-4-deoxy-D-glucuronate + L-rhamnopyranose. Its function is as follows. Catalyzes the hydrolysis of unsaturated rhamnogalacturonan disaccharide to yield unsaturated D-galacturonic acid and L-rhamnose. It cannot act on unsaturated glucuronyl hydrolase (UGL) substrates containing unsaturated D-glucuronic acid at the non-reducing terminus, although the active pockets of YesR and UGL are very similar. This chain is Unsaturated rhamnogalacturonyl hydrolase YesR (yesR), found in Bacillus subtilis (strain 168).